A 510-amino-acid chain; its full sequence is 2,3-bisphosphoglycerate-independent phosphoglycerate mutase (510 aa).

Mn(2+) is bound by residues Asp-12 and Ser-62. Ser-62 serves as the catalytic Phosphoserine intermediate. Substrate is bound by residues His-123, 152–153, Arg-184, Arg-190, 257–260, and Lys-331; these read RD and RADR. Mn(2+) is bound by residues Asp-399, His-403, Asp-440, His-441, and His-458.

The protein belongs to the BPG-independent phosphoglycerate mutase family. As to quaternary structure, monomer. Requires Mn(2+) as cofactor.

It carries out the reaction (2R)-2-phosphoglycerate = (2R)-3-phosphoglycerate. It participates in carbohydrate degradation; glycolysis; pyruvate from D-glyceraldehyde 3-phosphate: step 3/5. In terms of biological role, catalyzes the interconversion of 2-phosphoglycerate and 3-phosphoglycerate. In Lawsonia intracellularis (strain PHE/MN1-00), this protein is 2,3-bisphosphoglycerate-independent phosphoglycerate mutase.